A 185-amino-acid chain; its full sequence is 3-hexulose-6-phosphate isomerase (185 aa).

One can recognise an SIS domain in the interval 29 to 172 (LADHILSSHQ…ILKLMEKKGL (144 aa)). Residues Ser-47 and 86 to 91 (SGSGET) each bind substrate. Residue Glu-152 is the Proton acceptor of the active site.

Belongs to the SIS family. PHI subfamily. Homotetramer.

The enzyme catalyses D-arabino-hex-3-ulose 6-phosphate = beta-D-fructose 6-phosphate. The protein operates within one-carbon metabolism; formaldehyde assimilation via RuMP pathway; D-fructose 6-phosphate from D-ribulose 5-phosphate and formaldehyde: step 2/2. Functionally, catalyzes the isomerization between 3-hexulose 6-phosphate and fructose 6-phosphate. Together with HxlA, may act as a formaldehyde detoxification system. The chain is 3-hexulose-6-phosphate isomerase (hxlB) from Bacillus subtilis (strain 168).